We begin with the raw amino-acid sequence, 341 residues long: 3-dehydroquinate synthase (341 aa).

Residues 54-59 (DGEKYK), 88-92 (GVVTD), 112-113 (TT), Lys125, Lys133, and 151-154 (TLST) contribute to the NAD(+) site. Positions 166, 220, and 236 each coordinate Zn(2+).

Belongs to the sugar phosphate cyclases superfamily. Dehydroquinate synthase family. It depends on NAD(+) as a cofactor. The cofactor is Co(2+). Zn(2+) is required as a cofactor.

The protein localises to the cytoplasm. It carries out the reaction 7-phospho-2-dehydro-3-deoxy-D-arabino-heptonate = 3-dehydroquinate + phosphate. It participates in metabolic intermediate biosynthesis; chorismate biosynthesis; chorismate from D-erythrose 4-phosphate and phosphoenolpyruvate: step 2/7. In terms of biological role, catalyzes the conversion of 3-deoxy-D-arabino-heptulosonate 7-phosphate (DAHP) to dehydroquinate (DHQ). The chain is 3-dehydroquinate synthase from Thermococcus kodakarensis (strain ATCC BAA-918 / JCM 12380 / KOD1) (Pyrococcus kodakaraensis (strain KOD1)).